Consider the following 361-residue polypeptide: Chorismate synthase (361 aa).

NADP(+)-binding residues include Arg-48 and Arg-54. FMN-binding positions include 131–133 (RSS), 243–244 (NA), Gly-287, 302–306 (KPTSS), and Arg-328.

This sequence belongs to the chorismate synthase family. Homotetramer. Requires FMNH2 as cofactor.

It catalyses the reaction 5-O-(1-carboxyvinyl)-3-phosphoshikimate = chorismate + phosphate. Its pathway is metabolic intermediate biosynthesis; chorismate biosynthesis; chorismate from D-erythrose 4-phosphate and phosphoenolpyruvate: step 7/7. Catalyzes the anti-1,4-elimination of the C-3 phosphate and the C-6 proR hydrogen from 5-enolpyruvylshikimate-3-phosphate (EPSP) to yield chorismate, which is the branch point compound that serves as the starting substrate for the three terminal pathways of aromatic amino acid biosynthesis. This reaction introduces a second double bond into the aromatic ring system. The polypeptide is Chorismate synthase (Rhodopseudomonas palustris (strain BisB5)).